The following is a 179-amino-acid chain: Large ribosomal subunit protein uL6 (179 aa).

Belongs to the universal ribosomal protein uL6 family. Part of the 50S ribosomal subunit.

In terms of biological role, this protein binds to the 23S rRNA, and is important in its secondary structure. It is located near the subunit interface in the base of the L7/L12 stalk, and near the tRNA binding site of the peptidyltransferase center. In Spiroplasma citri, this protein is Large ribosomal subunit protein uL6.